A 126-amino-acid polypeptide reads, in one-letter code: UPF0102 protein P9303_16141 (126 aa).

Belongs to the UPF0102 family.

This is UPF0102 protein P9303_16141 from Prochlorococcus marinus (strain MIT 9303).